The sequence spans 368 residues: Propane 2-monooxygenase, hydroxylase component small subunit (368 aa).

Residues 1 to 33 are disordered; that stretch reads MSAPAQPRERSFPSIEFTDAEADAREFPSSRSR.

The protein belongs to the TmoE/XamoE family. In terms of assembly, the propane 2-monooxygenase multicomponent enzyme system is composed of an electron transfer component and a monooxygenase component interacting with the effector protein PrmD. The electron transfer component is composed of a reductase (PrmB), and the monooxygenase component is formed by a large subunit (PrmA) and a small subunit (PrmC). Probably requires the presence of the chaperonin-like protein PrmG to ensure a productive folding, resulting of a soluble PrmC, which leads to the active form of PrmABCD.

The catalysed reaction is propane + NADH + O2 + H(+) = propan-2-ol + NAD(+) + H2O. The enzyme catalyses phenol + NADH + O2 + H(+) = hydroquinone + NAD(+) + H2O. Its function is as follows. Component of the propane 2-monooxygenase multicomponent enzyme system which is involved in the degradation of propane via the O2-dependent hydroxylation of propane. Under acetone induction, also able to catalyze the oxidation of phenol to yield hydroquinone. The protein is Propane 2-monooxygenase, hydroxylase component small subunit of Gordonia sp. (strain TY-5).